Consider the following 167-residue polypeptide: Cell number regulator 3 (167 aa).

The chain crosses the membrane as a helical span at residues 67 to 84 (GMTSCGTSAALFALIQWL).

Belongs to the cornifelin family. As to expression, expressed only in pollen.

Its subcellular location is the membrane. The sequence is that of Cell number regulator 3 (CNR3) from Zea mays (Maize).